The sequence spans 179 residues: Apoptosis regulator Bcl-2 homolog (179 aa).

Residues 76–95 carry the BH1 motif; that stretch reads ELFKDLINWGRICGFIVFSA. Residues 126 to 141 carry the BH2 motif; the sequence is PWMISHGGQEEFLAFS.

The protein belongs to the Bcl-2 family. Interacts with host BECN1 (via BH3 homology domain); this interaction allows the virus to inhibit BECN1, and thus autophagy. Interacts with host BID. Interacts with host BAX.

It is found in the host mitochondrion. It localises to the host endoplasmic reticulum. In terms of biological role, suppresses apoptosis in host cell to promote the viral replication. Has the ability to potentially bind to all the members of the proapoptotic Bcl-2 family. Inhibits autophagy by interacting with host Beclin 1 (BECN1). The sequence is that of Apoptosis regulator Bcl-2 homolog from African swine fever virus (isolate Tick/South Africa/Pretoriuskop Pr4/1996) (ASFV).